The sequence spans 193 residues: Phosphoheptose isomerase (193 aa).

An SIS domain is found at 37-193; it reads IAQSFKNEKK…LIIEKEMQKN (157 aa). 52–54 contacts substrate; that stretch reads NGG. Zn(2+)-binding residues include His-61 and Glu-65. Residues Glu-65, 93 to 94, 119 to 121, Ser-124, and Gln-172 each bind substrate; these read ND and STS. Zn(2+) contacts are provided by Gln-172 and His-180.

It belongs to the SIS family. GmhA subfamily. As to quaternary structure, homotetramer. The cofactor is Zn(2+).

It is found in the cytoplasm. It catalyses the reaction 2 D-sedoheptulose 7-phosphate = D-glycero-alpha-D-manno-heptose 7-phosphate + D-glycero-beta-D-manno-heptose 7-phosphate. It participates in carbohydrate biosynthesis; D-glycero-D-manno-heptose 7-phosphate biosynthesis; D-glycero-alpha-D-manno-heptose 7-phosphate and D-glycero-beta-D-manno-heptose 7-phosphate from sedoheptulose 7-phosphate: step 1/1. In terms of biological role, catalyzes the isomerization of sedoheptulose 7-phosphate in D-glycero-D-manno-heptose 7-phosphate. This is Phosphoheptose isomerase from Buchnera aphidicola subsp. Acyrthosiphon pisum (strain 5A).